Consider the following 283-residue polypeptide: Bifunctional protein FolD (283 aa).

NADP(+)-binding positions include Gly-165–Ser-167, Ser-190, and Val-231.

This sequence belongs to the tetrahydrofolate dehydrogenase/cyclohydrolase family. In terms of assembly, homodimer.

It catalyses the reaction (6R)-5,10-methylene-5,6,7,8-tetrahydrofolate + NADP(+) = (6R)-5,10-methenyltetrahydrofolate + NADPH. The catalysed reaction is (6R)-5,10-methenyltetrahydrofolate + H2O = (6R)-10-formyltetrahydrofolate + H(+). It participates in one-carbon metabolism; tetrahydrofolate interconversion. Catalyzes the oxidation of 5,10-methylenetetrahydrofolate to 5,10-methenyltetrahydrofolate and then the hydrolysis of 5,10-methenyltetrahydrofolate to 10-formyltetrahydrofolate. This Bacillus pumilus (strain SAFR-032) protein is Bifunctional protein FolD.